A 134-amino-acid polypeptide reads, in one-letter code: ATP synthase epsilon chain (134 aa).

The protein belongs to the ATPase epsilon chain family. F-type ATPases have 2 components, CF(1) - the catalytic core - and CF(0) - the membrane proton channel. CF(1) has five subunits: alpha(3), beta(3), gamma(1), delta(1), epsilon(1). CF(0) has three main subunits: a, b and c.

The protein resides in the cell membrane. Its function is as follows. Produces ATP from ADP in the presence of a proton gradient across the membrane. The sequence is that of ATP synthase epsilon chain from Pelotomaculum thermopropionicum (strain DSM 13744 / JCM 10971 / SI).